A 534-amino-acid chain; its full sequence is Serine/threonine-protein kinase Nek6 (534 aa).

The region spanning 4–257 (YEVVEQIGRG…AGELLRHPYL (254 aa)) is the Protein kinase domain. Residues 10–18 (IGRGAYGSA) and Lys-33 each bind ATP. Asp-129 acts as the Proton acceptor in catalysis. 2 disordered regions span residues 278–306 (KSNL…SSEA) and 425–449 (KAHT…SSPK).

This sequence belongs to the protein kinase superfamily. NEK Ser/Thr protein kinase family. NIMA subfamily. As to quaternary structure, interacts with DIS1. In terms of processing, ubiquitinated by the E3 ligase DIS1. Ubiquitination of NEK6 leads to its degradation via the 26S proteasome-dependent pathway. As to expression, expressed in anthers, pistils and leaves.

The protein resides in the cytoplasm. The catalysed reaction is L-seryl-[protein] + ATP = O-phospho-L-seryl-[protein] + ADP + H(+). It carries out the reaction L-threonyl-[protein] + ATP = O-phospho-L-threonyl-[protein] + ADP + H(+). Functionally, may be involved in plant development processes. In Oryza sativa subsp. japonica (Rice), this protein is Serine/threonine-protein kinase Nek6.